A 248-amino-acid polypeptide reads, in one-letter code: Adenosylcobinamide-GDP ribazoletransferase (248 aa).

The next 7 membrane-spanning stretches (helical) occupy residues 32–52 (FPLV…IGMV), 60–80 (ALLV…DGLA), 103–123 (AVGS…WIAL), 134–154 (WIVS…SVMT), 170–190 (AGGW…VLVM), 195–215 (LPIV…GMLA), and 227–247 (LGAS…LLLF).

The protein belongs to the CobS family. Mg(2+) is required as a cofactor.

It is found in the cell inner membrane. The catalysed reaction is alpha-ribazole + adenosylcob(III)inamide-GDP = adenosylcob(III)alamin + GMP + H(+). It carries out the reaction alpha-ribazole 5'-phosphate + adenosylcob(III)inamide-GDP = adenosylcob(III)alamin 5'-phosphate + GMP + H(+). It participates in cofactor biosynthesis; adenosylcobalamin biosynthesis; adenosylcobalamin from cob(II)yrinate a,c-diamide: step 7/7. In terms of biological role, joins adenosylcobinamide-GDP and alpha-ribazole to generate adenosylcobalamin (Ado-cobalamin). Also synthesizes adenosylcobalamin 5'-phosphate from adenosylcobinamide-GDP and alpha-ribazole 5'-phosphate. In Prosthecochloris aestuarii (strain DSM 271 / SK 413), this protein is Adenosylcobinamide-GDP ribazoletransferase.